A 621-amino-acid chain; its full sequence is GPI-anchor transamidase component GPAA1 (621 aa).

The Cytoplasmic portion of the chain corresponds to 1-19 (MGLLSDPVRRRALARIVLR). Residues 20–41 (LNTPLCVLSYVAGIAWFLALAF) traverse the membrane as a helical segment. The Lumenal portion of the chain corresponds to 42–370 (PPLTQRTYMS…LLPALSRFVS (329 aa)). A 2-acyl-6-[6-phosphoethanolamine-alpha-D-mannosyl-(1-&gt;2)-6-phosphoethanolamine-alpha-D-mannosyl-(1-&gt;6)-2-phosphoethanolamine-alpha-D-mannosyl-(1-&gt;4)-alpha-D-glucosaminyl]-1-(1-radyl,2-acyl-sn-glycero-3-phospho)-1D-myo-inositol-binding residues include Tyr49 and Ser51. N-linked (GlcNAc...) asparagine glycosylation is present at Asn203. A disulfide bridge connects residues Cys259 and Cys266. 3 residues coordinate a 2-acyl-6-[6-phosphoethanolamine-alpha-D-mannosyl-(1-&gt;2)-6-phosphoethanolamine-alpha-D-mannosyl-(1-&gt;6)-2-phosphoethanolamine-alpha-D-mannosyl-(1-&gt;4)-alpha-D-glucosaminyl]-1-(1-radyl,2-acyl-sn-glycero-3-phospho)-1D-myo-inositol: His354, Gln355, and Ser356. Position 355 (Gln355) interacts with Mg(2+). The helical transmembrane segment at 371 to 393 (IGLYMPATGFLLLVLGLKALELW) threads the bilayer. At 394–425 (MQLHQAGVNPEEAGKAPSPGTPLLPTQGVGLA) the chain is on the cytoplasmic side. A helical membrane pass occupies residues 426-450 (SLTAPLLISQAMGLALYFLPVLGQH). Residues 451-462 (LATQHFPVAEAE) lie on the Lumenal side of the membrane. A helical membrane pass occupies residues 463 to 483 (AVVLTLLAIYVAGLALPHNTH). Over 484–495 (RVVNSQVPDRGW) the chain is Cytoplasmic. Helical transmembrane passes span 496 to 519 (MALK…LNFS) and 520 to 536 (LGFL…ALAK). Residues 537–540 (PHGP) lie on the Cytoplasmic side of the membrane. A helical membrane pass occupies residues 541–563 (RTLYAALLVVTSPAVTLFGSLFL). The Lumenal portion of the chain corresponds to 564 to 597 (WRELLEVPLSLAEGWQLFLTALAQGVLEHYTYGA). Residues 598–619 (LLFPILALGLYPCWLLFWNVLF) traverse the membrane as a helical segment. Residues 620–621 (WK) lie on the Cytoplasmic side of the membrane.

As to quaternary structure, heteropentamer. Part of the GPI-anchor transamidase complex, consisting of PIGK, PIGT, PIGS, PIGU and GAA1. Interacts with PIGK. As to expression, ubiquitously expressed in fetal and adult tissues. Expressed at higher levels in fetal tissues than adult tissues. In embryos abundant in the choroid plexus, skeletal muscle,.

Its subcellular location is the endoplasmic reticulum membrane. It functions in the pathway glycolipid biosynthesis; glycosylphosphatidylinositol-anchor biosynthesis. Functionally, component of the glycosylphosphatidylinositol-anchor (GPI-anchor) transamidase (GPI-T) complex that catalyzes the formation of the linkage between a proprotein and a GPI-anchor and participates in GPI anchored protein biosynthesis. Binds GPI-anchor. This Mus musculus (Mouse) protein is GPI-anchor transamidase component GPAA1.